The following is a 302-amino-acid chain: uncharacterized protein (302 aa).

N-linked (GlcNAc...) asparagine glycosylation is found at Asn32, Asn39, and Asn94. Positions 80–115 constitute a ShKT domain; sequence CRDTDMNCAVWVATNTSDCENVELVNSHCPRTCQTC. 3 disulfide bridges follow: Cys80–Cys115, Cys87–Cys108, and Cys98–Cys112. N-linked (GlcNAc...) asparagine glycosylation occurs at Asn181.

This is an uncharacterized protein from Caenorhabditis elegans.